The primary structure comprises 347 residues: Trace amine-associated receptor 4 (347 aa).

The Extracellular portion of the chain corresponds to 1 to 37 (MNSPDLWYSPETQFCFAAANNSCPRKARPALVVCAMY). A glycan (N-linked (GlcNAc...) asparagine) is linked at Asn-20. 2 cysteine pairs are disulfide-bonded: Cys-23/Cys-187 and Cys-106/Cys-191. The chain crosses the membrane as a helical span at residues 38–58 (LVMIGAIVMTMLGNMVVIISI). The Cytoplasmic segment spans residues 59 to 69 (AHFKQLHSPTN). Residues 70–90 (FLILSMATTDFLLSCVVMPFS) traverse the membrane as a helical segment. The Extracellular portion of the chain corresponds to 91–110 (MVRSIESCWYFGDLFCKVHS). Residues 111 to 129 (CCDIMLCTTSIFHLCFISV) traverse the membrane as a helical segment. Topologically, residues 130-149 (DRHYAVCDPLHYVTQITVGV) are cytoplasmic. A helical transmembrane segment spans residues 150-170 (VGVFLLISWSVPILFAFGLVF). Topologically, residues 171-197 (SELNLIGAEDFVAAIDCTGLCVLIFNK) are extracellular. The tract at residues 175–188 (LIGAEDFVAAIDCT) is extracellular Loop 2 (ECL2). Residues 198 to 218 (LWGVLASFIAFFLPGAIMVGI) traverse the membrane as a helical segment. Over 219–260 (YIHIFTVARKHARKIGPGPRTKRALSESKMKATSGKESKATK) the chain is Cytoplasmic. A helical membrane pass occupies residues 261 to 281 (TLSIVMGVFVLCWLPFFVLTI). Residues 282–296 (TDPFIGFTTPEDLYN) lie on the Extracellular side of the membrane. A helical transmembrane segment spans residues 297-317 (VFLWLGYFNSTFNPIIYGMFY). At 318 to 347 (PWFRKALRMIVTGTIFRSDSSTSSLHPAHP) the chain is on the cytoplasmic side.

The protein belongs to the G-protein coupled receptor 1 family.

Its subcellular location is the cell membrane. Olfactory receptor specific for 2-phenylethylamine, a trace amine present at high concentration in the urine of carnivore species, playing a key role in fear and avoidance responses. 2-phenylethylamine acts as a kairomone in the chemical detection of carnivore odor and triggers fear in rats. This receptor is probably mediated by the G(s)-class of G-proteins which activate adenylate cyclase. The sequence is that of Trace amine-associated receptor 4 from Rattus norvegicus (Rat).